Reading from the N-terminus, the 157-residue chain is S-ribosylhomocysteine lyase (157 aa).

Positions 54, 58, and 124 each coordinate Fe cation.

This sequence belongs to the LuxS family. In terms of assembly, homodimer. Fe cation serves as cofactor.

It carries out the reaction S-(5-deoxy-D-ribos-5-yl)-L-homocysteine = (S)-4,5-dihydroxypentane-2,3-dione + L-homocysteine. Its function is as follows. Involved in the synthesis of autoinducer 2 (AI-2) which is secreted by bacteria and is used to communicate both the cell density and the metabolic potential of the environment. The regulation of gene expression in response to changes in cell density is called quorum sensing. Catalyzes the transformation of S-ribosylhomocysteine (RHC) to homocysteine (HC) and 4,5-dihydroxy-2,3-pentadione (DPD). The polypeptide is S-ribosylhomocysteine lyase (Pediococcus pentosaceus (strain ATCC 25745 / CCUG 21536 / LMG 10740 / 183-1w)).